The primary structure comprises 158 residues: NAD(P)H-quinone oxidoreductase subunit J, chloroplastic (158 aa).

This sequence belongs to the complex I 30 kDa subunit family. As to quaternary structure, NDH is composed of at least 16 different subunits, 5 of which are encoded in the nucleus.

It localises to the plastid. It is found in the chloroplast thylakoid membrane. It catalyses the reaction a plastoquinone + NADH + (n+1) H(+)(in) = a plastoquinol + NAD(+) + n H(+)(out). The enzyme catalyses a plastoquinone + NADPH + (n+1) H(+)(in) = a plastoquinol + NADP(+) + n H(+)(out). Its function is as follows. NDH shuttles electrons from NAD(P)H:plastoquinone, via FMN and iron-sulfur (Fe-S) centers, to quinones in the photosynthetic chain and possibly in a chloroplast respiratory chain. The immediate electron acceptor for the enzyme in this species is believed to be plastoquinone. Couples the redox reaction to proton translocation, and thus conserves the redox energy in a proton gradient. This Platanus occidentalis (Sycamore) protein is NAD(P)H-quinone oxidoreductase subunit J, chloroplastic.